A 261-amino-acid chain; its full sequence is 4-phosphopantoate--beta-alanine ligase (261 aa).

ATP contacts are provided by residues Arg-17, Arg-39, 181-182, 187-188, and 199-200; these read DL, RS, and NI.

The protein belongs to the archaeal phosphopantothenate synthetase family. In terms of assembly, homodimer.

The catalysed reaction is (R)-4-phosphopantoate + beta-alanine + ATP = (R)-4'-phosphopantothenate + AMP + diphosphate + H(+). It participates in cofactor biosynthesis; coenzyme A biosynthesis. Catalyzes the condensation of (R)-4-phosphopantoate and beta-alanine to 4'-phosphopantothenate in the CoA biosynthesis pathway. This Thermococcus onnurineus (strain NA1) protein is 4-phosphopantoate--beta-alanine ligase.